A 329-amino-acid chain; its full sequence is DNA-directed RNA polymerase subunit alpha (329 aa).

Residues 1–234 (MQGSVTEFLK…EQLDAFVELR (234 aa)) are alpha N-terminal domain (alpha-NTD). The interval 248–329 (FDPILLRPVD…WPPASLADDL (82 aa)) is alpha C-terminal domain (alpha-CTD).

It belongs to the RNA polymerase alpha chain family. As to quaternary structure, homodimer. The RNAP catalytic core consists of 2 alpha, 1 beta, 1 beta' and 1 omega subunit. When a sigma factor is associated with the core the holoenzyme is formed, which can initiate transcription.

The catalysed reaction is RNA(n) + a ribonucleoside 5'-triphosphate = RNA(n+1) + diphosphate. Functionally, DNA-dependent RNA polymerase catalyzes the transcription of DNA into RNA using the four ribonucleoside triphosphates as substrates. The chain is DNA-directed RNA polymerase subunit alpha from Shewanella loihica (strain ATCC BAA-1088 / PV-4).